The chain runs to 359 residues: Peptide chain release factor 1 (359 aa).

Position 235 is an N5-methylglutamine (glutamine 235).

It belongs to the prokaryotic/mitochondrial release factor family. Methylated by PrmC. Methylation increases the termination efficiency of RF1.

It is found in the cytoplasm. Peptide chain release factor 1 directs the termination of translation in response to the peptide chain termination codons UAG and UAA. This chain is Peptide chain release factor 1, found in Polynucleobacter asymbioticus (strain DSM 18221 / CIP 109841 / QLW-P1DMWA-1) (Polynucleobacter necessarius subsp. asymbioticus).